A 203-amino-acid polypeptide reads, in one-letter code: MNNLKQGKFITFEGGEGIGKSTQSQMLYEYLQSQNTPVILTREVGGTIVAEKMREILVHEELLPISELLQVMAARYDHMARKIIPALQEGHIVICDRFIDSTVCYQGLELENGIDLVYNLHKTLMPSLMPDITFFIDVEPDTAIKRVNSRNMNNKFDIRGIDFYKKIYYCFKELSNRFPERIKTIKASDLSPLEVHELIKKHL.

14-21 serves as a coordination point for ATP; that stretch reads GGEGIGKS.

This sequence belongs to the thymidylate kinase family.

It carries out the reaction dTMP + ATP = dTDP + ADP. In terms of biological role, phosphorylation of dTMP to form dTDP in both de novo and salvage pathways of dTTP synthesis. This chain is Thymidylate kinase, found in Rickettsia africae (strain ESF-5).